Here is a 386-residue protein sequence, read N- to C-terminus: Enamidase (386 aa).

The Zn(2+) site is built by His-67, His-69, and Glu-164. Glu-164, His-193, and His-220 together coordinate Fe cation. Asp-276 serves as a coordination point for Zn(2+).

In terms of assembly, homotetramer. Dimer of dimers. Requires Fe cation as cofactor. It depends on Zn(2+) as a cofactor.

The catalysed reaction is 1,4,5,6-tetrahydro-6-oxonicotinate + 2 H2O = 2-formylglutarate + NH4(+). It functions in the pathway cofactor degradation; nicotinate degradation; propanoate and pyruvate from 6-hydroxynicotinate: step 2/8. Its function is as follows. Decyclization of 6-oxo-1,4,5,6-tetrahydronicotinate to form 2-(enamine)glutarate, followed by hydrolysis to form (S)-2-formylglutarate. This chain is Enamidase, found in Eubacterium barkeri (Clostridium barkeri).